A 381-amino-acid chain; its full sequence is Chitin deacetylase 8 (381 aa).

Residues 1 to 18 form the signal peptide; the sequence is MKRLSVLCSLLLVAAALG. Disulfide bonds link Cys27–Cys39 and Cys32–Cys37. Zn(2+)-binding residues include Asp63, His117, and His121. Disulfide bonds link Cys86–Cys335, Cys211–Cys216, Cys240–Cys246, Cys343–Cys365, and Cys348–Cys368. Asn171 carries N-linked (GlcNAc...) asparagine glycosylation.

Belongs to the carbohydrate esterase 4 (CE4) family. Requires Zn(2+) as cofactor. Strongly expressed in the midgut. Has little or no expression in other tissues tested.

Its subcellular location is the secreted. The enzyme catalyses [(1-&gt;4)-N-acetyl-beta-D-glucosaminyl](n) + n H2O = chitosan + n acetate. Hydrolyzes the N-acetamido groups of N-acetyl-D-glucosamine (GlcNAc) residues in chitin. Shows activity towards the chitinous oligomers GlcNAc(3), GlcNAc(4), GlcNAc(5) and GlcNAc(6), but not GlcNAc or GlcNAc(2). Requires the substrate to occupy subsites 0, +1, and +2 for optimum catalysis. In Bombyx mori (Silk moth), this protein is Chitin deacetylase 8.